Here is a 392-residue protein sequence, read N- to C-terminus: Chorismate synthase (392 aa).

The NADP(+) site is built by R40 and R46. Residues 129–131 (RSS), 257–258 (QA), G302, 317–321 (KPIAT), and R343 contribute to the FMN site.

This sequence belongs to the chorismate synthase family. In terms of assembly, homotetramer. FMNH2 is required as a cofactor.

It carries out the reaction 5-O-(1-carboxyvinyl)-3-phosphoshikimate = chorismate + phosphate. The protein operates within metabolic intermediate biosynthesis; chorismate biosynthesis; chorismate from D-erythrose 4-phosphate and phosphoenolpyruvate: step 7/7. Its function is as follows. Catalyzes the anti-1,4-elimination of the C-3 phosphate and the C-6 proR hydrogen from 5-enolpyruvylshikimate-3-phosphate (EPSP) to yield chorismate, which is the branch point compound that serves as the starting substrate for the three terminal pathways of aromatic amino acid biosynthesis. This reaction introduces a second double bond into the aromatic ring system. The chain is Chorismate synthase from Chloroherpeton thalassium (strain ATCC 35110 / GB-78).